The sequence spans 100 residues: Ribosomal biogenesis factor (100 aa).

Residue serine 19 is modified to Phosphoserine. At lysine 21 the chain carries N6-acetyllysine. Phosphoserine is present on serine 69.

Associates with the pre-60S ribosomal particles.

It localises to the nucleus. It is found in the nucleolus. Functionally, trans-acting factor in ribosome biogenesis required for efficient 40S and 60S subunit production. This chain is Ribosomal biogenesis factor (RBIS), found in Bos taurus (Bovine).